Reading from the N-terminus, the 520-residue chain is Ribonuclease Y (520 aa).

At 1–3 (MTP) the chain is on the extracellular side. The chain crosses the membrane as a helical span at residues 4 to 24 (IMMVLISILLILLGLVVGYFV). Residues 25–520 (RKTIAEAKIA…RETRAVEYAK (496 aa)) lie on the Cytoplasmic side of the membrane. Residues 29–141 (AEAKIAGARG…KVDEMIRMQQ (113 aa)) are a coiled coil. Residues 210–273 (TVSVVNLPND…ETARIALDKL (64 aa)) enclose the KH domain. Positions 336–429 (VLKHSMEVAF…VAAADALSAA (94 aa)) constitute an HD domain.

Belongs to the RNase Y family. Homodimer. Component of a possible RNA degradosome complex composed of rny, rnjA, rnjB, pnp, pfkA and eno (although rnjA and rnjB's presence is unclear). Interacts with RNA helicase CshA which may also be a member of the RNA degradosome complex. Interacts with full-length dynamin-like protein DynA. Requires Mg(2+) as cofactor. Mn(2+) is required as a cofactor. It depends on Zn(2+) as a cofactor.

Its subcellular location is the cell membrane. With respect to regulation, shows preference for transcripts carrying a monophosphate group at the 5' end. Its function is as follows. Endoribonuclease that initiates mRNA decay. Initiates the decay of all SAM-dependent riboswitches, such as yitJ riboswitch. Involved in processing of the gapA operon mRNA, it cleaves between cggR and gapA. Is also the decay-initiating endonuclease for rpsO mRNA. Involved in degradation of type I toxin-antitoxin system bsrG/SR4 RNAs and a minor role in degradation of type I toxin-antitoxin system bsrE/SR5 degradation. In Bacillus subtilis (strain 168), this protein is Ribonuclease Y (rny).